The sequence spans 214 residues: Ribosomal RNA small subunit methyltransferase G (214 aa).

Residues Gly72, Phe77, 125–126 (VE), and Arg141 contribute to the S-adenosyl-L-methionine site.

The protein belongs to the methyltransferase superfamily. RNA methyltransferase RsmG family.

Its subcellular location is the cytoplasm. It carries out the reaction guanosine(527) in 16S rRNA + S-adenosyl-L-methionine = N(7)-methylguanosine(527) in 16S rRNA + S-adenosyl-L-homocysteine. Functionally, specifically methylates the N7 position of guanine in position 527 of 16S rRNA. The sequence is that of Ribosomal RNA small subunit methyltransferase G from Sinorhizobium fredii (strain NBRC 101917 / NGR234).